The following is a 365-amino-acid chain: MKKTSLSSWHEKAGAKIIDFGGWLMPVQYSGIMAEHKAVRSAAGLFDVSHMGNFYVKGRRALEFLQSVTTNDLSRTVDGQAQYTIMLYENGGIVDDLIIYRIDSVTFFLIVNAGNCDKDFAWLEEHAGAFEGVQLSNHSDQLSLIALQGPKAFSILSRVIPEIDADRLPSFHFRQLPFMGAELMVARTGYTGEAGVEICLPNALAQPLWEALLDAGREDGLVPVGLGARDTLRLEMGYSLYGHEIDQDTNPLEARLKWVVSMEKGPFIGREACRQVELDPRFGVAGFSLEGRALARQGCRVFNADRQEIGKVCSGTISPTLQEPIGTASLVREYLKPGTPVFVEIRGSLQPGQIRRLPFVKPALL.

The protein belongs to the GcvT family. As to quaternary structure, the glycine cleavage system is composed of four proteins: P, T, L and H.

The catalysed reaction is N(6)-[(R)-S(8)-aminomethyldihydrolipoyl]-L-lysyl-[protein] + (6S)-5,6,7,8-tetrahydrofolate = N(6)-[(R)-dihydrolipoyl]-L-lysyl-[protein] + (6R)-5,10-methylene-5,6,7,8-tetrahydrofolate + NH4(+). Functionally, the glycine cleavage system catalyzes the degradation of glycine. This Chlorobium phaeovibrioides (strain DSM 265 / 1930) (Prosthecochloris vibrioformis (strain DSM 265)) protein is Aminomethyltransferase.